Reading from the N-terminus, the 644-residue chain is ATP-dependent zinc metalloprotease FtsH (644 aa).

Over 1–11 (MNDNKNNTVRN) the chain is Stromal. The chain crosses the membrane as a helical span at residues 12–32 (LLIGIALLSGISLTAKKFDLI). Residues 33 to 128 (GVQGSESGKN…FDAHPAEQKN (96 aa)) are Lumenal-facing. Residues 129 to 149 (IFVNILSNILLPIIFITGLVY) traverse the membrane as a helical segment. Residues 150 to 644 (LFQNSENFGG…KNIPYVSKFN (495 aa)) lie on the Stromal side of the membrane. Position 226–233 (226–233 (GPPGTGKT)) interacts with ATP. A Zn(2+)-binding site is contributed by His447. Glu448 is an active-site residue. Zn(2+) contacts are provided by His451 and Asp525.

In the central section; belongs to the AAA ATPase family. It in the C-terminal section; belongs to the peptidase M41 family. Homohexamer. Requires Zn(2+) as cofactor.

It is found in the plastid. It localises to the chloroplast thylakoid membrane. Acts as a processive, ATP-dependent zinc metallopeptidase. In Trieres chinensis (Marine centric diatom), this protein is ATP-dependent zinc metalloprotease FtsH.